Reading from the N-terminus, the 402-residue chain is MAVELTSIKLNPENHLLLDQPLLRVPHELARRNFKSVQRIVEREKDYVLPALKETANASLSGSKNPTETIEALDAMITRMQGLKRKMEVLHEEEKKIATQSQKRIQYIQDLYKIPSLADVKYEQWSRTRLNRLLADHMLRSGYLESAKQLAEDKGIADLVDLSVFAQCQRIAHSLRRGETKEALQWCGENKVALKKIQNRLEFELRLQQYIEVLRVGDKAEARQHAKKFLTPHSETQSHDIQRAAGLLAYPPDTRAEPYMSMYSLERWKHLSDLFIRTHHDLLSLSSRPLLQIALSAGLSALKTPSCHSAIASSRASPLSLSTSICPICSTELNELARHVPYAHHTKSSVENDPVVLPNRRVYGMDRLSDMSKKAGVPEGKVKDPITGEIFDVSEVKKVYIS.

One can recognise a LisH domain in the interval 126-158 (SRTRLNRLLADHMLRSGYLESAKQLAEDKGIAD). The CTLH domain occupies 164-221 (VFAQCQRIAHSLRRGETKEALQWCGENKVALKKIQNRLEFELRLQQYIEVLRVGDKAE). An RING-Gid-type zinc finger spans residues 326–387 (CPICSTELNE…PEGKVKDPIT (62 aa)).

The protein belongs to the FYV10 family.

The protein resides in the cytoplasm. The protein localises to the nucleus. Involved in the proteasome-dependent degradation of fructose-1,6-bisphosphatase. The chain is Protein FYV10 (FYV10) from Coccidioides immitis (strain RS) (Valley fever fungus).